Consider the following 365-residue polypeptide: Regulatory protein RapG (365 aa).

TPR repeat units lie at residues 135–168 (GKLY…KKKL), 169–202 (ASAL…TSEL), 209–242 (AQLL…DEYA), 244–284 (SAYY…EPNR), and 326–359 (RELS…EELI).

The protein belongs to the Rap family.

The protein resides in the cytoplasm. Inhibited by PhrG. Functionally, involved in the regulation of expression of DegU-controlled genes. Inhibits the binding of DegU to the promoter regions of aprE, coding for an extracellular alkaline protease, and comK, a master regulator for development of genetic competence. RapG does not stimulate dephosphorylation of DegU-P. The sequence is that of Regulatory protein RapG (rapG) from Bacillus subtilis (strain 168).